Reading from the N-terminus, the 156-residue chain is 6,7-dimethyl-8-ribityllumazine synthase (156 aa).

5-amino-6-(D-ribitylamino)uracil contacts are provided by residues F23, 57-59 (AFE), and 81-83 (TVI). 86–87 (ST) contacts (2S)-2-hydroxy-3-oxobutyl phosphate. H89 acts as the Proton donor in catalysis. F114 lines the 5-amino-6-(D-ribitylamino)uracil pocket. Residue R128 coordinates (2S)-2-hydroxy-3-oxobutyl phosphate.

This sequence belongs to the DMRL synthase family. Forms an icosahedral capsid composed of 60 subunits, arranged as a dodecamer of pentamers.

It catalyses the reaction (2S)-2-hydroxy-3-oxobutyl phosphate + 5-amino-6-(D-ribitylamino)uracil = 6,7-dimethyl-8-(1-D-ribityl)lumazine + phosphate + 2 H2O + H(+). It participates in cofactor biosynthesis; riboflavin biosynthesis; riboflavin from 2-hydroxy-3-oxobutyl phosphate and 5-amino-6-(D-ribitylamino)uracil: step 1/2. Functionally, catalyzes the formation of 6,7-dimethyl-8-ribityllumazine by condensation of 5-amino-6-(D-ribitylamino)uracil with 3,4-dihydroxy-2-butanone 4-phosphate. This is the penultimate step in the biosynthesis of riboflavin. The chain is 6,7-dimethyl-8-ribityllumazine synthase from Halalkalibacterium halodurans (strain ATCC BAA-125 / DSM 18197 / FERM 7344 / JCM 9153 / C-125) (Bacillus halodurans).